The following is a 31-amino-acid chain: Palustrin-2a (31 aa).

Cysteines 23 and 29 form a disulfide.

As to expression, expressed by the skin glands.

The protein localises to the secreted. Antimicrobial activity against Gram-negative bacterium E.coli. The sequence is that of Palustrin-2a from Lithobates palustris (Pickerel frog).